Reading from the N-terminus, the 326-residue chain is Tagatose 1,6-diphosphate aldolase (326 aa).

Belongs to the aldolase LacD family.

The enzyme catalyses D-tagatofuranose 1,6-bisphosphate = D-glyceraldehyde 3-phosphate + dihydroxyacetone phosphate. It participates in carbohydrate metabolism; D-tagatose 6-phosphate degradation; D-glyceraldehyde 3-phosphate and glycerone phosphate from D-tagatose 6-phosphate: step 2/2. This chain is Tagatose 1,6-diphosphate aldolase, found in Staphylococcus aureus (strain MSSA476).